Here is a 434-residue protein sequence, read N- to C-terminus: MSFNTIIDWNSCTAEQQRQLLMRPAISASESITRTVNDILDNVKARGDEALREYSAKFDKTTVTALKVSAEEIAAASERLSDELKQAMAVAVKNIETFHTAQKLPPVDVETQPGVRCQQVTRPVASVGLYIPGGSAPLFSTVLMLATPARIAGCKKVVLCSPPPIADEILYAAQLCGVQDVFNVGGAQAIAALAFGTESVPKVDKIFGPGNAFVTEAKRQVSQRLDGAAIDMPAGPSEVLVIADSGATPDFVASDLLSQAEHGPDSQVILLTPAADMARRVAEAVERQLAELPRAETARQALNASRLIVTKDLAQCVEISNQYGPEHLIIQTRNARDLVDGITSAGSVFLGDWSLESAGDYASGTNHVLPTYGYTATCSSLGLADFQKRMTVQELSKEGFSALASTIETLAAAERLTAHKNAVTLRVNALKEQA.

The NAD(+) site is built by Y130, Q188, and N211. Positions 237, 259, and 262 each coordinate substrate. Zn(2+) contacts are provided by Q259 and H262. Residues E326 and H327 each act as proton acceptor in the active site. Positions 327, 360, 414, and 419 each coordinate substrate. D360 provides a ligand contact to Zn(2+). H419 is a binding site for Zn(2+).

It belongs to the histidinol dehydrogenase family. Homodimer. The cofactor is Zn(2+).

The catalysed reaction is L-histidinol + 2 NAD(+) + H2O = L-histidine + 2 NADH + 3 H(+). It participates in amino-acid biosynthesis; L-histidine biosynthesis; L-histidine from 5-phospho-alpha-D-ribose 1-diphosphate: step 9/9. In terms of biological role, catalyzes the sequential NAD-dependent oxidations of L-histidinol to L-histidinaldehyde and then to L-histidine. This chain is Histidinol dehydrogenase, found in Shigella boydii serotype 4 (strain Sb227).